A 568-amino-acid chain; its full sequence is Sphingosine-1-phosphate lyase 1 (568 aa).

Residues 1-41 (MPSTDLLTLKAFEPYLEILEVYSTKAKNYVNGHCTKYEPWQ) lie on the Lumenal side of the membrane. Residues 42–62 (LIAWSVVWTLLIVWGYEFVFQ) traverse the membrane as a helical; Signal-anchor for type III membrane protein segment. Residues 63 to 568 (PESLWSRFKK…SQMNGSPKPH (506 aa)) are Cytoplasmic-facing. Lysine 353 is modified (N6-(pyridoxal phosphate)lysine; alternate). N6-acetyllysine; alternate is present on lysine 353. Tyrosine 356 and tyrosine 366 each carry 3'-nitrotyrosine. Serine 564 carries the phosphoserine modification.

It belongs to the group II decarboxylase family. Sphingosine-1-phosphate lyase subfamily. Homodimer. Pyridoxal 5'-phosphate is required as a cofactor.

It is found in the endoplasmic reticulum membrane. The enzyme catalyses sphinganine 1-phosphate = hexadecanal + phosphoethanolamine. It catalyses the reaction sphing-4-enine 1-phosphate = (2E)-hexadecenal + phosphoethanolamine. It functions in the pathway lipid metabolism; sphingolipid metabolism. In terms of biological role, cleaves phosphorylated sphingoid bases (PSBs), such as sphingosine-1-phosphate, into fatty aldehydes and phosphoethanolamine. Elevates stress-induced ceramide production and apoptosis. Required for global lipid homeostasis in liver and cholesterol homeostasis in fibroblasts. Involved in the regulation of pro-inflammatory response and neutrophil trafficking. Modulates neuronal autophagy via phosphoethanolamine production which regulates accumulation of aggregate-prone proteins such as APP. Seems to play a role in establishing neuronal contact sites and axonal maintenance. The chain is Sphingosine-1-phosphate lyase 1 from Pongo abelii (Sumatran orangutan).